The primary structure comprises 86 residues: Cell division topological specificity factor (86 aa).

Belongs to the MinE family.

Its function is as follows. Prevents the cell division inhibition by proteins MinC and MinD at internal division sites while permitting inhibition at polar sites. This ensures cell division at the proper site by restricting the formation of a division septum at the midpoint of the long axis of the cell. This is Cell division topological specificity factor from Rhizobium johnstonii (strain DSM 114642 / LMG 32736 / 3841) (Rhizobium leguminosarum bv. viciae).